The following is a 65-amino-acid chain: Hainantoxin-X.2 (65 aa).

The first 20 residues, 1–20 (MNVKILVLVAVLCLVVSTHA), serve as a signal peptide directing secretion. Positions 21 to 37 (ERHSKTDMEDSPMIQER) are excised as a propeptide. Cystine bridges form between C39-C56, C46-C59, and C55-C64.

It belongs to the neurotoxin 36 family. 02 subfamily. In terms of tissue distribution, expressed by the venom gland.

The protein localises to the secreted. Functionally, reversibly blocks N-type calcium channels (Cav2.2/CACNA1B) in rat dorsal root ganglion cells. Elicits no toxic symptoms in either vertebrates or invertebrates during a period of 48 hours post-injection, when it was assayed in vivo by direct injection into mice and cockroaches. The polypeptide is Hainantoxin-X.2 (Cyriopagopus hainanus (Chinese bird spider)).